We begin with the raw amino-acid sequence, 189 residues long: Glycerol-3-phosphate acyltransferase (189 aa).

A run of 5 helical transmembrane segments spans residues 1 to 21 (MFWL…AIVL), 50 to 70 (KLAI…VLLA), 77 to 97 (LHAQ…PLYF), 111 to 131 (MLMA…LLTF), and 151 to 171 (LLAW…VMIV).

It belongs to the PlsY family. In terms of assembly, probably interacts with PlsX.

Its subcellular location is the cell inner membrane. The catalysed reaction is an acyl phosphate + sn-glycerol 3-phosphate = a 1-acyl-sn-glycero-3-phosphate + phosphate. It participates in lipid metabolism; phospholipid metabolism. Catalyzes the transfer of an acyl group from acyl-phosphate (acyl-PO(4)) to glycerol-3-phosphate (G3P) to form lysophosphatidic acid (LPA). This enzyme utilizes acyl-phosphate as fatty acyl donor, but not acyl-CoA or acyl-ACP. This is Glycerol-3-phosphate acyltransferase from Pseudomonas putida (strain ATCC 47054 / DSM 6125 / CFBP 8728 / NCIMB 11950 / KT2440).